Reading from the N-terminus, the 512-residue chain is ATP synthase subunit alpha (512 aa).

Position 169–176 (169–176 (GDRQTGKT)) interacts with ATP.

The protein belongs to the ATPase alpha/beta chains family. F-type ATPases have 2 components, CF(1) - the catalytic core - and CF(0) - the membrane proton channel. CF(1) has five subunits: alpha(3), beta(3), gamma(1), delta(1), epsilon(1). CF(0) has three main subunits: a(1), b(2) and c(9-12). The alpha and beta chains form an alternating ring which encloses part of the gamma chain. CF(1) is attached to CF(0) by a central stalk formed by the gamma and epsilon chains, while a peripheral stalk is formed by the delta and b chains.

It localises to the cell inner membrane. It carries out the reaction ATP + H2O + 4 H(+)(in) = ADP + phosphate + 5 H(+)(out). Its function is as follows. Produces ATP from ADP in the presence of a proton gradient across the membrane. The alpha chain is a regulatory subunit. This chain is ATP synthase subunit alpha, found in Ruegeria pomeroyi (strain ATCC 700808 / DSM 15171 / DSS-3) (Silicibacter pomeroyi).